The sequence spans 591 residues: Aspartate--tRNA ligase (591 aa).

Residue E172 coordinates L-aspartate. Residues 196–199 (QLFK) form an aspartate region. R218 contributes to the L-aspartate binding site. Residues 218 to 220 (RDE) and Q227 each bind ATP. H449 provides a ligand contact to L-aspartate. Position 483 (E483) interacts with ATP. R490 contributes to the L-aspartate binding site. ATP is bound at residue 535 to 538 (GLDR).

The protein belongs to the class-II aminoacyl-tRNA synthetase family. Type 1 subfamily. Homodimer.

The protein localises to the cytoplasm. The catalysed reaction is tRNA(Asp) + L-aspartate + ATP = L-aspartyl-tRNA(Asp) + AMP + diphosphate. Functionally, catalyzes the attachment of L-aspartate to tRNA(Asp) in a two-step reaction: L-aspartate is first activated by ATP to form Asp-AMP and then transferred to the acceptor end of tRNA(Asp). The sequence is that of Aspartate--tRNA ligase from Actinobacillus pleuropneumoniae serotype 5b (strain L20).